The sequence spans 521 residues: Bifunctional purine biosynthesis protein PurH (521 aa).

The region spanning 1-145 (MIKQALISVS…KNHRDVTVVV (145 aa)) is the MGS-like domain.

The protein belongs to the PurH family.

The catalysed reaction is (6R)-10-formyltetrahydrofolate + 5-amino-1-(5-phospho-beta-D-ribosyl)imidazole-4-carboxamide = 5-formamido-1-(5-phospho-D-ribosyl)imidazole-4-carboxamide + (6S)-5,6,7,8-tetrahydrofolate. It carries out the reaction IMP + H2O = 5-formamido-1-(5-phospho-D-ribosyl)imidazole-4-carboxamide. Its pathway is purine metabolism; IMP biosynthesis via de novo pathway; 5-formamido-1-(5-phospho-D-ribosyl)imidazole-4-carboxamide from 5-amino-1-(5-phospho-D-ribosyl)imidazole-4-carboxamide (10-formyl THF route): step 1/1. It participates in purine metabolism; IMP biosynthesis via de novo pathway; IMP from 5-formamido-1-(5-phospho-D-ribosyl)imidazole-4-carboxamide: step 1/1. This is Bifunctional purine biosynthesis protein PurH from Burkholderia ambifaria (strain ATCC BAA-244 / DSM 16087 / CCUG 44356 / LMG 19182 / AMMD) (Burkholderia cepacia (strain AMMD)).